Here is a 412-residue protein sequence, read N- to C-terminus: MKAEIMAIGTEILLGDIVNTNAQFLAKELANLGIGVYHQSVVGDNSERILEAFDNAFKNCDTIITTGGLGPTKDDLSKELAAKYFNMEMCLREELLCDLEDYFKKNNLEMTENNKKQCYFPKEAIILPNPNGTAPGAILEGENNKRIILLPGPPREMEPMFTNHVVPYLSKFTDSVLVSKILRVFGIGESKMDDLVCDLLDNENPTVAPYAKNIDVILRITAKGKDKEEAEKLIAPMEKEIRKRLGDNIYGEGEVTLEEVVGKLLVDKKMTVSTAESCTGGMVASTLINYPGISEVFMEGAVTYSNEAKMKRLGVKKETLEDFGAVSEECAREMAKGIAKNAETRIGISITGIAGPGGGTEEKPVGLVYAGLCIDGITKVKKFNFKADRQKVRTRTMMNVLDWLRRELEKID.

Belongs to the CinA family.

This is Putative competence-damage inducible protein from Clostridium perfringens (strain SM101 / Type A).